A 343-amino-acid chain; its full sequence is Thromboxane A2 receptor (343 aa).

The Extracellular portion of the chain corresponds to 1-29; it reads MWPNGSSLGPCFRPTNITLEERRLIASPW. N-linked (GlcNAc...) asparagine glycosylation is found at Asn4 and Asn16. The helical transmembrane segment at 30 to 52 threads the bilayer; sequence FAASFCVVGLASNLLALSVLAGA. Residues 53-66 are Cytoplasmic-facing; that stretch reads RQGGSHTRSSFLTF. Residues 67–87 form a helical membrane-spanning segment; that stretch reads LCGLVLTDFLGLLVTGTIVVS. The Extracellular segment spans residues 88–106; the sequence is QHAALFEWHAVDPGCRLCR. Cysteines 105 and 183 form a disulfide. Residues 107-128 form a helical membrane-spanning segment; the sequence is FMGVVMIFFGLSPLLLGAAMAS. Topologically, residues 129–149 are cytoplasmic; the sequence is ERYLGITRPFSRPAVASQRRA. A helical membrane pass occupies residues 150–172; sequence WATVGLVWAAALALGLLPLLGVG. Residues 173–193 are Extracellular-facing; sequence RYTVQYPGSWCFLTLGAESGD. The chain crosses the membrane as a helical span at residues 194 to 219; it reads VAFGLLFSMLGGLSVGLSFLLNTVSV. Residues 220 to 246 are Cytoplasmic-facing; that stretch reads ATLCHVYHGQEAAQQRPRDSEVEMMAQ. Residues 247-270 traverse the membrane as a helical segment; that stretch reads LLGIMVVASVCWLPLLVFIAQTVL. At 271–289 the chain is on the extracellular side; it reads RNPPAMSPAGQLSRTTEKE. Residues 290–311 form a helical membrane-spanning segment; it reads LLIYLRVATWNQILDPWVYILF. The Cytoplasmic segment spans residues 312–343; sequence RRAVLRRLQPRLSTRPRSLSLQPQLTQRSGLQ. Residues Ser329 and Ser331 each carry the phosphoserine modification.

It belongs to the G-protein coupled receptor 1 family. In terms of assembly, interacts with RPGRIP1L. Interacts with PSMA3. Interacts with RACK1; the interaction regulates TBXA2R cell surface expression.

It localises to the cell membrane. Its function is as follows. Receptor for thromboxane A2 (TXA2), a potent stimulator of platelet aggregation. The activity of this receptor is mediated by a G-protein that activates a phosphatidylinositol-calcium second messenger system. In the kidney, the binding of TXA2 to glomerular TP receptors causes intense vasoconstriction. Activates phospholipase C. Activates adenylyl cyclase. In terms of biological role, inhibits adenylyl cyclase. The chain is Thromboxane A2 receptor (TBXA2R) from Homo sapiens (Human).